Reading from the N-terminus, the 1400-residue chain is DNA-directed RNA polymerase subunit beta' (1400 aa).

Zn(2+) is bound by residues Cys-70, Cys-72, Cys-85, and Cys-88. Residues Asp-460, Asp-462, and Asp-464 each contribute to the Mg(2+) site. 4 residues coordinate Zn(2+): Cys-814, Cys-888, Cys-895, and Cys-898.

It belongs to the RNA polymerase beta' chain family. In terms of assembly, the RNAP catalytic core consists of 2 alpha, 1 beta, 1 beta' and 1 omega subunit. When a sigma factor is associated with the core the holoenzyme is formed, which can initiate transcription. The cofactor is Mg(2+). Zn(2+) is required as a cofactor.

It carries out the reaction RNA(n) + a ribonucleoside 5'-triphosphate = RNA(n+1) + diphosphate. Functionally, DNA-dependent RNA polymerase catalyzes the transcription of DNA into RNA using the four ribonucleoside triphosphates as substrates. The protein is DNA-directed RNA polymerase subunit beta' of Methylococcus capsulatus (strain ATCC 33009 / NCIMB 11132 / Bath).